A 248-amino-acid polypeptide reads, in one-letter code: 5'-nucleotidase SurE (248 aa).

Residues D8, D9, S39, and N91 each contribute to the a divalent metal cation site.

The protein belongs to the SurE nucleotidase family. The cofactor is a divalent metal cation.

The protein resides in the cytoplasm. The enzyme catalyses a ribonucleoside 5'-phosphate + H2O = a ribonucleoside + phosphate. Nucleotidase that shows phosphatase activity on nucleoside 5'-monophosphates. The chain is 5'-nucleotidase SurE from Neisseria meningitidis serogroup B (strain ATCC BAA-335 / MC58).